Here is a 209-residue protein sequence, read N- to C-terminus: V-type ATP synthase subunit D (209 aa).

It belongs to the V-ATPase D subunit family.

In terms of biological role, produces ATP from ADP in the presence of a proton gradient across the membrane. This chain is V-type ATP synthase subunit D, found in Anaeromyxobacter sp. (strain K).